A 106-amino-acid polypeptide reads, in one-letter code: Large ribosomal subunit protein uL24 (106 aa).

It belongs to the universal ribosomal protein uL24 family. In terms of assembly, part of the 50S ribosomal subunit.

In terms of biological role, one of two assembly initiator proteins, it binds directly to the 5'-end of the 23S rRNA, where it nucleates assembly of the 50S subunit. Functionally, one of the proteins that surrounds the polypeptide exit tunnel on the outside of the subunit. In Marinobacter nauticus (strain ATCC 700491 / DSM 11845 / VT8) (Marinobacter aquaeolei), this protein is Large ribosomal subunit protein uL24.